Here is a 143-residue protein sequence, read N- to C-terminus: FAM161 homolog famh-136 (143 aa).

The protein belongs to the FAM136 family.

The protein resides in the cytoplasm. Functionally, may play a role in locomotion and behavior. The protein is FAM161 homolog famh-136 of Caenorhabditis elegans.